Here is a 465-residue protein sequence, read N- to C-terminus: Probable protein phosphatase 2C 71 (465 aa).

Disordered regions lie at residues 14–47 (RPCK…ACRA), 68–119 (RPRD…GEVT), and 133–191 (SGGA…PAEE). Residues 18-30 (LAPPPPPPLPVSP) are compositionally biased toward pro residues. 2 stretches are compositionally biased toward low complexity: residues 84–106 (AVAP…AAAE) and 133–143 (SGGAEATATSG). Residues 222-460 (ASGAAILPHP…DDIAVVVSIV (239 aa)) form the PPM-type phosphatase domain. Aspartate 254, glycine 255, aspartate 384, and aspartate 451 together coordinate Mn(2+).

It belongs to the PP2C family. It depends on Mg(2+) as a cofactor. Mn(2+) serves as cofactor.

It carries out the reaction O-phospho-L-seryl-[protein] + H2O = L-seryl-[protein] + phosphate. The enzyme catalyses O-phospho-L-threonyl-[protein] + H2O = L-threonyl-[protein] + phosphate. In Oryza sativa subsp. japonica (Rice), this protein is Probable protein phosphatase 2C 71.